Consider the following 280-residue polypeptide: Succinate dehydrogenase [ubiquinone] iron-sulfur subunit, mitochondrial (280 aa).

Residues 1–28 (MAAVVAVSLKRWFPATTLGGACLQACRG) constitute a mitochondrion transit peptide. One can recognise a 2Fe-2S ferredoxin-type domain in the interval 40 to 131 (KKFAIYRWDP…DKVSKIYPLP (92 aa)). N6-acetyllysine occurs at positions 51 and 55. Residues C93, C98, C101, and C113 each contribute to the [2Fe-2S] cluster site. An interaction with SDHAF1 region spans residues 146 to 218 (FYAQYKSIEP…PAVLMQAYRW (73 aa)). In terms of domain architecture, 4Fe-4S ferredoxin-type spans 176-206 (EREKLDGLYECILCACCSTSCPSYWWNGDKY). Residues C186, C189, and C192 each coordinate [4Fe-4S] cluster. C196 serves as a coordination point for [3Fe-4S] cluster. An a ubiquinone-binding site is contributed by W201. [3Fe-4S] cluster contacts are provided by C243 and C249. C253 contacts [4Fe-4S] cluster.

Belongs to the succinate dehydrogenase/fumarate reductase iron-sulfur protein family. As to quaternary structure, component of complex II composed of four subunits: the flavoprotein (FP) SDHA, iron-sulfur protein (IP) SDHB, and a cytochrome b560 composed of SDHC and SDHD. Interacts with SDHAF1; the interaction is required for iron-sulfur cluster incorporation into SDHB. The cofactor is [2Fe-2S] cluster. Requires [3Fe-4S] cluster as cofactor. [4Fe-4S] cluster is required as a cofactor.

The protein localises to the mitochondrion inner membrane. It catalyses the reaction a quinone + succinate = fumarate + a quinol. It carries out the reaction (R)-malate + a quinone = enol-oxaloacetate + a quinol. The catalysed reaction is (S)-malate + a quinone = enol-oxaloacetate + a quinol. It participates in carbohydrate metabolism; tricarboxylic acid cycle; fumarate from succinate (eukaryal route): step 1/1. Its activity is regulated as follows. Enol-oxaloacetate inhibits the succinate dehydrogenase activity. Functionally, iron-sulfur protein (IP) subunit of the succinate dehydrogenase complex (mitochondrial respiratory chain complex II), responsible for transferring electrons from succinate to ubiquinone (coenzyme Q). SDH also oxidizes malate to the non-canonical enol form of oxaloacetate, enol-oxaloacetate. Enol-oxaloacetate, which is a potent inhibitor of the succinate dehydrogenase activity, is further isomerized into keto-oxaloacetate. This is Succinate dehydrogenase [ubiquinone] iron-sulfur subunit, mitochondrial (SDHB) from Sus scrofa (Pig).